We begin with the raw amino-acid sequence, 121 residues long: Basic phospholipase A2 homolog BnSP-7 (121 aa).

Cystine bridges form between Cys-26–Cys-115, Cys-28–Cys-44, Cys-43–Cys-95, Cys-49–Cys-121, Cys-50–Cys-88, Cys-57–Cys-81, and Cys-75–Cys-86. An important for membrane-damaging activities in eukaryotes and bacteria; heparin-binding region spans residues 105-117; it reads KKYRYHLKPFCKK.

This sequence belongs to the phospholipase A2 family. Group II subfamily. K49 sub-subfamily. As to quaternary structure, homodimer; non-covalently linked (probable alternative/compact dimer conformation in solution). As to expression, expressed by the venom gland.

The protein resides in the secreted. With respect to regulation, heparin inhibits the neuromuscular effect, myotoxin activity and edema-inducing effects. Bromophenacyl bromide (BPB) inhibits the neuromuscular effect, the myotoxin activity and edema-inducing effects. Snake venom phospholipase A2 (PLA2) that lacks enzymatic activity. Is myotoxic and displays edema-inducing activity. Displays bactericidal activity and promotes the blockage of the neuromuscular contraction of the chick biventer cervicis muscle. Also disrupts artificial membranes, and provokes tissue damages characterized by edema, necrosis and inflammation. May act as pro-inflammatory mediators, inducing metalloproteinase and cytokine production from the inflammatory and satellite cells. A model of myotoxic mechanism has been proposed: an apo Lys49-PLA2 is activated by the entrance of a hydrophobic molecule (e.g. fatty acid) at the hydrophobic channel of the protein leading to a reorientation of a monomer. This reorientation causes a transition between 'inactive' to 'active' states, causing alignment of C-terminal and membrane-docking sites (MDoS) side-by-side and putting the membrane-disruption sites (MDiS) in the same plane, exposed to solvent and in a symmetric position for both monomers. The MDoS region stabilizes the toxin on membrane by the interaction of charged residues with phospholipid head groups. Subsequently, the MDiS region destabilizes the membrane with penetration of hydrophobic residues. This insertion causes a disorganization of the membrane, allowing an uncontrolled influx of ions (i.e. calcium and sodium), and eventually triggering irreversible intracellular alterations and cell death. In Bothrops pauloensis (Neuwied's lancehead), this protein is Basic phospholipase A2 homolog BnSP-7.